A 366-amino-acid polypeptide reads, in one-letter code: Histidinol-phosphate aminotransferase (366 aa).

The residue at position 222 (lysine 222) is an N6-(pyridoxal phosphate)lysine.

It belongs to the class-II pyridoxal-phosphate-dependent aminotransferase family. Histidinol-phosphate aminotransferase subfamily. Homodimer. Pyridoxal 5'-phosphate serves as cofactor.

The enzyme catalyses L-histidinol phosphate + 2-oxoglutarate = 3-(imidazol-4-yl)-2-oxopropyl phosphate + L-glutamate. It participates in amino-acid biosynthesis; L-histidine biosynthesis; L-histidine from 5-phospho-alpha-D-ribose 1-diphosphate: step 7/9. The protein is Histidinol-phosphate aminotransferase of Lysinibacillus sphaericus (strain C3-41).